Here is a 445-residue protein sequence, read N- to C-terminus: MSNRKYFGTDGIRGRVGDAPITPDFVLKLGWAAGKVLARHGSRKVIIGKDTRISGYMLESALEAGLAAAGLSALFTGPMPTPAVAYLTRTFRAEAGIVISASHNPFYDNGIKFFSIEGTKLPDEVEEAIEAELEKEISCVDSAELGKASRIVDAAGRYIEFCKGTFPNELSLNGLKIVVDCANGATYHIAPNVLRELGARVVTIGSEPDGLNINEKCGATDVRLLQERVVAEKADLGIAFDGDGDRVIMVDHEGNKVDGDQILYIIAREGLRQGQLRGGAVGTLMSNMGLEVALKQLGIPFARAKVGDRYVLEKMQEKGWRIGAENSGHVILLDKTTTGDGIVAALQVLTAIARNHMSLHDLCSGMKLFPQILVNVRFTPGSGDPLEHDTVKAVTEEVEQALGKRGRVLLRKSGTEPLIRVMVEGENEAQVTEFAHRIADAVKAV.

The Phosphoserine intermediate role is filled by S102. The Mg(2+) site is built by S102, D241, D243, and D245. At S102 the chain carries Phosphoserine.

The protein belongs to the phosphohexose mutase family. The cofactor is Mg(2+). Activated by phosphorylation.

It catalyses the reaction alpha-D-glucosamine 1-phosphate = D-glucosamine 6-phosphate. Catalyzes the conversion of glucosamine-6-phosphate to glucosamine-1-phosphate. This Cronobacter sakazakii (strain ATCC BAA-894) (Enterobacter sakazakii) protein is Phosphoglucosamine mutase.